A 154-amino-acid chain; its full sequence is Transcriptional repressor NrdR (154 aa).

A zinc finger spans residues 3–34; sequence CPFCRHPDSRVVDSRETDEGQAIRRRRSCPEC. Residues 46 to 136 enclose the ATP-cone domain; sequence LAVVKRSGVT…VYRSFSSAED (91 aa).

This sequence belongs to the NrdR family. Zn(2+) is required as a cofactor.

Its function is as follows. Negatively regulates transcription of bacterial ribonucleotide reductase nrd genes and operons by binding to NrdR-boxes. The protein is Transcriptional repressor NrdR of Mycolicibacterium gilvum (strain PYR-GCK) (Mycobacterium gilvum (strain PYR-GCK)).